A 64-amino-acid chain; its full sequence is Large ribosomal subunit protein bL35 (64 aa).

Positions 1-14 are enriched in basic residues; it reads MKQKTHKGAAKRIK. A disordered region spans residues 1–50; that stretch reads MKQKTHKGAAKRIKISGSGKLRREQANRRHLLEGKPSKRTRRLKGTEDVA. Basic and acidic residues predominate over residues 21–36; it reads LRREQANRRHLLEGKP.

It belongs to the bacterial ribosomal protein bL35 family.

This is Large ribosomal subunit protein bL35 from Corynebacterium jeikeium (strain K411).